An 85-amino-acid chain; its full sequence is Large ribosomal subunit protein bL27 (85 aa).

The disordered stretch occupies residues 1–24 (MAHKKGQGSSRNGRDSNAQRRGVK).

Belongs to the bacterial ribosomal protein bL27 family.

This chain is Large ribosomal subunit protein bL27, found in Syntrophus aciditrophicus (strain SB).